A 200-amino-acid polypeptide reads, in one-letter code: Pyridoxal 5'-phosphate synthase subunit PdxT (200 aa).

L-glutamine is bound at residue 52 to 54; the sequence is GES. Catalysis depends on Cys84, which acts as the Nucleophile. L-glutamine is bound by residues Arg116 and 145 to 146; that span reads IR. Active-site charge relay system residues include His181 and Glu183.

The protein belongs to the glutaminase PdxT/SNO family. As to quaternary structure, in the presence of PdxS, forms a dodecamer of heterodimers. Only shows activity in the heterodimer.

It catalyses the reaction aldehydo-D-ribose 5-phosphate + D-glyceraldehyde 3-phosphate + L-glutamine = pyridoxal 5'-phosphate + L-glutamate + phosphate + 3 H2O + H(+). The enzyme catalyses L-glutamine + H2O = L-glutamate + NH4(+). It participates in cofactor biosynthesis; pyridoxal 5'-phosphate biosynthesis. Its function is as follows. Catalyzes the hydrolysis of glutamine to glutamate and ammonia as part of the biosynthesis of pyridoxal 5'-phosphate. The resulting ammonia molecule is channeled to the active site of PdxS. This chain is Pyridoxal 5'-phosphate synthase subunit PdxT, found in Saccharolobus islandicus (strain Y.N.15.51 / Yellowstone #2) (Sulfolobus islandicus).